We begin with the raw amino-acid sequence, 579 residues long: Aspartate--tRNA(Asp/Asn) ligase (579 aa).

An L-aspartate-binding site is contributed by glutamate 171. The interval 195–198 is aspartate; that stretch reads QLFK. Residue arginine 217 coordinates L-aspartate. ATP contacts are provided by residues 217-219 and glutamine 226; that span reads RDE. Histidine 444 contacts L-aspartate. Position 475 (glutamate 475) interacts with ATP. Arginine 482 lines the L-aspartate pocket. 527 to 530 contributes to the ATP binding site; it reads GLDR.

It belongs to the class-II aminoacyl-tRNA synthetase family. Type 1 subfamily. Homodimer.

The protein resides in the cytoplasm. The catalysed reaction is tRNA(Asx) + L-aspartate + ATP = L-aspartyl-tRNA(Asx) + AMP + diphosphate. Functionally, aspartyl-tRNA synthetase with relaxed tRNA specificity since it is able to aspartylate not only its cognate tRNA(Asp) but also tRNA(Asn). Reaction proceeds in two steps: L-aspartate is first activated by ATP to form Asp-AMP and then transferred to the acceptor end of tRNA(Asp/Asn). The sequence is that of Aspartate--tRNA(Asp/Asn) ligase from Thermotoga neapolitana (strain ATCC 49049 / DSM 4359 / NBRC 107923 / NS-E).